Here is a 561-residue protein sequence, read N- to C-terminus: Arginine--tRNA ligase (561 aa).

The 'HIGH' region motif lies at 129-139; sequence ANPTGPLHIGH.

The protein belongs to the class-I aminoacyl-tRNA synthetase family. In terms of assembly, monomer.

Its subcellular location is the cytoplasm. It carries out the reaction tRNA(Arg) + L-arginine + ATP = L-arginyl-tRNA(Arg) + AMP + diphosphate. This is Arginine--tRNA ligase from Geotalea daltonii (strain DSM 22248 / JCM 15807 / FRC-32) (Geobacter daltonii).